The chain runs to 365 residues: MNITNCTTEASMAIRPKTITEKMLICMTLVVITTLTTLLNLAVIMAIGTTKKLHQPANYLICSLAVTDLLVAVLVMPLSIIYIVMDRWKLGYFLCEVWLSVDMTCCTCSILHLCVIALDRYWAITNAIEYARKRTAKRAALMILTVWTISIFISMPPLFWRSHRRLSPPPSQCTIQHDHVIYTIYSTLGAFYIPLTLILILYYRIYHAAKSLYQKRGSSRHLSNRSTDSQNSFASCKLTQTFCVSDFSTSDPTTEFEKFHASIRIPPFDNDLDHPGERQQISSTRERKAARILGLILGAFILSWLPFFIKELIVGLSIYTVSSEVADFLTWLGYVNSLINPLLYTSFNEDFKLAFKKLIRCREHT.

Residues 1 to 21 (MNITNCTTEASMAIRPKTITE) lie on the Extracellular side of the membrane. 2 N-linked (GlcNAc...) asparagine glycosylation sites follow: asparagine 2 and asparagine 5. A helical membrane pass occupies residues 22–45 (KMLICMTLVVITTLTTLLNLAVIM). Residues 46–59 (AIGTTKKLHQPANY) are Cytoplasmic-facing. A helical transmembrane segment spans residues 60–84 (LICSLAVTDLLVAVLVMPLSIIYIV). At 85 to 92 (MDRWKLGY) the chain is on the extracellular side. The chain crosses the membrane as a helical span at residues 93–118 (FLCEVWLSVDMTCCTCSILHLCVIAL). The cysteines at positions 95 and 173 are disulfide-linked. Positions 102 and 106 each coordinate serotonin. The short motif at 119–121 (DRY) is the DRY motif; important for ligand-induced conformation changes element. Residues 119–138 (DRYWAITNAIEYARKRTAKR) are Cytoplasmic-facing. A helical transmembrane segment spans residues 139 to 157 (AALMILTVWTISIFISMPP). At 158 to 179 (LFWRSHRRLSPPPSQCTIQHDH) the chain is on the extracellular side. A helical transmembrane segment spans residues 180–203 (VIYTIYSTLGAFYIPLTLILILYY). At 204 to 291 (RIYHAAKSLY…SSTRERKAAR (88 aa)) the chain is on the cytoplasmic side. The helical transmembrane segment at 292 to 316 (ILGLILGAFILSWLPFFIKELIVGL) threads the bilayer. The Extracellular segment spans residues 317–322 (SIYTVS). A helical transmembrane segment spans residues 323–345 (SEVADFLTWLGYVNSLINPLLYT). Positions 340 to 344 (NPLLY) match the NPxxY motif; important for ligand-induced conformation changes and signaling motif. At 346–365 (SFNEDFKLAFKKLIRCREHT) the chain is on the cytoplasmic side.

This sequence belongs to the G-protein coupled receptor 1 family. In terms of tissue distribution, detected in brain.

Its subcellular location is the cell membrane. Its function is as follows. G-protein coupled receptor for 5-hydroxytryptamine (serotonin). Also functions as a receptor for various alkaloids and psychoactive substances. Ligand binding causes a conformation change that triggers signaling via guanine nucleotide-binding proteins (G proteins) and modulates the activity of downstream effectors, such as adenylate cyclase. HTR1E is coupled to G(i)/G(o) G alpha proteins and mediates inhibitory neurotransmission by inhibiting adenylate cyclase activity. This is 5-hydroxytryptamine receptor 1E from Homo sapiens (Human).